Reading from the N-terminus, the 88-residue chain is Large ribosomal subunit protein bL27 (88 aa).

A disordered region spans residues 1 to 22 (MAQKKAGGSSRNGRDSAGRRLG).

It belongs to the bacterial ribosomal protein bL27 family.

This chain is Large ribosomal subunit protein bL27, found in Gluconobacter oxydans (strain 621H) (Gluconobacter suboxydans).